The chain runs to 457 residues: Argininosuccinate lyase (457 aa).

Belongs to the lyase 1 family. Argininosuccinate lyase subfamily.

The protein localises to the cytoplasm. The catalysed reaction is 2-(N(omega)-L-arginino)succinate = fumarate + L-arginine. Its pathway is amino-acid biosynthesis; L-arginine biosynthesis; L-arginine from L-ornithine and carbamoyl phosphate: step 3/3. In Histophilus somni (strain 129Pt) (Haemophilus somnus), this protein is Argininosuccinate lyase.